The sequence spans 243 residues: 1-(5-phosphoribosyl)-5-[(5-phosphoribosylamino)methylideneamino] imidazole-4-carboxamide isomerase (243 aa).

Catalysis depends on aspartate 8, which acts as the Proton acceptor. Aspartate 129 functions as the Proton donor in the catalytic mechanism.

The protein belongs to the HisA/HisF family.

It is found in the cytoplasm. It catalyses the reaction 1-(5-phospho-beta-D-ribosyl)-5-[(5-phospho-beta-D-ribosylamino)methylideneamino]imidazole-4-carboxamide = 5-[(5-phospho-1-deoxy-D-ribulos-1-ylimino)methylamino]-1-(5-phospho-beta-D-ribosyl)imidazole-4-carboxamide. Its pathway is amino-acid biosynthesis; L-histidine biosynthesis; L-histidine from 5-phospho-alpha-D-ribose 1-diphosphate: step 4/9. This is 1-(5-phosphoribosyl)-5-[(5-phosphoribosylamino)methylideneamino] imidazole-4-carboxamide isomerase from Brucella suis biovar 1 (strain 1330).